The primary structure comprises 733 residues: ATP-dependent RNA helicase MAK5 (733 aa).

The tract at residues Glu53 to Asp132 is disordered. The segment covering Glu58 to Glu99 has biased composition (acidic residues). The segment covering Pro100–Glu126 has biased composition (basic and acidic residues). A Q motif motif is present at residues Gly155–Lys183. In terms of domain architecture, Helicase ATP-binding spans Ile186–Asn376. Residue Ala199–Thr206 participates in ATP binding. The short motif at Asp315–Asp318 is the DEAD box element. Positions Asp428 to Asp594 constitute a Helicase C-terminal domain.

Belongs to the DEAD box helicase family. DDX24/MAK5 subfamily.

Its subcellular location is the nucleus. The protein localises to the nucleolus. It carries out the reaction ATP + H2O = ADP + phosphate + H(+). Its function is as follows. ATP-binding RNA helicase involved in the biogenesis of 60S ribosomal subunits and is required for the normal formation of 25S and 5.8S rRNAs. This chain is ATP-dependent RNA helicase MAK5 (MAK5), found in Candida glabrata (strain ATCC 2001 / BCRC 20586 / JCM 3761 / NBRC 0622 / NRRL Y-65 / CBS 138) (Yeast).